A 214-amino-acid chain; its full sequence is Glycerol-3-phosphate acyltransferase (214 aa).

Transmembrane regions (helical) follow at residues 4–24 (LIVA…IVSA), 52–72 (AAIL…WFVV), 82–102 (ETSV…PVFF), 118–138 (LAIN…VAFF), and 159–179 (FLFG…LLVW).

This sequence belongs to the PlsY family. In terms of assembly, probably interacts with PlsX.

The protein localises to the cell inner membrane. It catalyses the reaction an acyl phosphate + sn-glycerol 3-phosphate = a 1-acyl-sn-glycero-3-phosphate + phosphate. It participates in lipid metabolism; phospholipid metabolism. Its function is as follows. Catalyzes the transfer of an acyl group from acyl-phosphate (acyl-PO(4)) to glycerol-3-phosphate (G3P) to form lysophosphatidic acid (LPA). This enzyme utilizes acyl-phosphate as fatty acyl donor, but not acyl-CoA or acyl-ACP. The protein is Glycerol-3-phosphate acyltransferase of Paraburkholderia phytofirmans (strain DSM 17436 / LMG 22146 / PsJN) (Burkholderia phytofirmans).